Here is a 215-residue protein sequence, read N- to C-terminus: N-(5'-phosphoribosyl)anthranilate isomerase (215 aa).

The protein belongs to the TrpF family.

It catalyses the reaction N-(5-phospho-beta-D-ribosyl)anthranilate = 1-(2-carboxyphenylamino)-1-deoxy-D-ribulose 5-phosphate. It functions in the pathway amino-acid biosynthesis; L-tryptophan biosynthesis; L-tryptophan from chorismate: step 3/5. This chain is N-(5'-phosphoribosyl)anthranilate isomerase, found in Rhizobium meliloti (strain 1021) (Ensifer meliloti).